The primary structure comprises 478 residues: Proline--tRNA ligase (478 aa).

It belongs to the class-II aminoacyl-tRNA synthetase family. ProS type 3 subfamily. In terms of assembly, homodimer.

It localises to the cytoplasm. It catalyses the reaction tRNA(Pro) + L-proline + ATP = L-prolyl-tRNA(Pro) + AMP + diphosphate. Functionally, catalyzes the attachment of proline to tRNA(Pro) in a two-step reaction: proline is first activated by ATP to form Pro-AMP and then transferred to the acceptor end of tRNA(Pro). This is Proline--tRNA ligase from Clostridium botulinum (strain Loch Maree / Type A3).